The chain runs to 114 residues: 11.9 kDa wall protein (114 aa).

The propeptide occupies 1–6 (MSFKTR).

It localises to the secreted. The protein localises to the cell wall. Its function is as follows. May play a role in the structure of the hypha-forming fruit bodies. The protein is 11.9 kDa wall protein (TDF-1) of Tuber dryophilum (Truffle).